Reading from the N-terminus, the 168-residue chain is Protein OPG162 (168 aa).

Residues 1 to 14 (MKSLNRQTVSMFKK) are Intravirion-facing. A helical membrane pass occupies residues 15–37 (LSVPAAIMMILSTIISGIGTFLH). Over 38-168 (YKEELMPSAC…SVLCVKKFYK (131 aa)) the chain is Virion surface. The C-type lectin domain occupies 54–163 (YDKHCYLDTN…CKSTQSVLCV (110 aa)). Cystine bridges form between Cys75/Cys162 and Cys141/Cys154. The N-linked (GlcNAc...) asparagine; by host glycan is linked to Asn133.

This sequence belongs to the orthopoxvirus OPG162 protein family. In terms of assembly, interacts with protein OPG161. Interacts with protein OPG164. Interacts with protein OPG190.

It is found in the virion membrane. Its subcellular location is the host Golgi apparatus. In terms of biological role, forms a complex with OPG162 and OPG190 to coordinate the incorporation of OPG164 into wrapped enveloped virion (EV) membranes and, subsequently, the production of actin tails. Therefore plays an essential role in efficient cell-to-cell spread of viral particles. The polypeptide is Protein OPG162 (OPG162) (Homo sapiens (Human)).